The primary structure comprises 366 residues: MIRTEEMLLNVGPQHPSTHGVFRLVIKIDGEIIKEATPVIGYLHRGTEKIAESLQYTQIIPYTDRMDYLSAMTNNYVICHAVETMMGLEIPERAEYLRVLAMELGRIASHLVWWGTNLLDIGAVSPFLYAFREREMIINLLNELCGARLTFNYMRVGGVKWDAPDGWIEKVEEFVPYMREQLAGYHDLVSGNEIFLNRVKGVGIYSAEEAISYSLSGANLRCTGVNWDLRKDEPYSIYDRFDFHIPVGSVGDAWDRYVCRMQEIEESLKIVEQAVQQFPKEGAVLAKVPKIIKAPKGEAFVRIESPRGEIGCYIASDGKKEPYRLKFRRPSFYNLQILPKLLKGENIANLITILGGVDIVLGEVDG.

The protein belongs to the complex I 49 kDa subunit family. NDH-1 is composed of 14 different subunits. Subunits NuoB, C, D, E, F, and G constitute the peripheral sector of the complex.

It localises to the cell membrane. It carries out the reaction a quinone + NADH + 5 H(+)(in) = a quinol + NAD(+) + 4 H(+)(out). Its function is as follows. NDH-1 shuttles electrons from NADH, via FMN and iron-sulfur (Fe-S) centers, to quinones in the respiratory chain. The immediate electron acceptor for the enzyme in this species is believed to be a menaquinone. Couples the redox reaction to proton translocation (for every two electrons transferred, four hydrogen ions are translocated across the cytoplasmic membrane), and thus conserves the redox energy in a proton gradient. In Bacillus thuringiensis subsp. konkukian (strain 97-27), this protein is NADH-quinone oxidoreductase subunit D.